The primary structure comprises 591 residues: Cineole synthase 1, chloroplastic (591 aa).

The N-terminal 44 residues, M1 to R44, are a transit peptide targeting the chloroplast. (2E)-geranyl diphosphate-binding residues include R308, D345, D349, R486, and D489. Mg(2+) contacts are provided by D345 and D349. The short motif at D345–D349 is the DDXXD motif element. Mg(2+) is bound by residues D489, T493, and E497.

This sequence belongs to the terpene synthase family. Tpsb subfamily. In terms of assembly, monomer. Requires Mg(2+) as cofactor. Mn(2+) is required as a cofactor.

The protein localises to the plastid. The protein resides in the chloroplast. The enzyme catalyses (2E)-geranyl diphosphate + H2O = 1,8-cineole + diphosphate. The catalysed reaction is (2E)-geranyl diphosphate = alpha-pinene + diphosphate. It carries out the reaction (2E)-geranyl diphosphate = beta-pinene + diphosphate. It catalyses the reaction (2E)-geranyl diphosphate + H2O = (S)-alpha-terpineol + diphosphate. The enzyme catalyses (2E)-geranyl diphosphate = beta-myrcene + diphosphate. The catalysed reaction is (2E)-geranyl diphosphate = sabinene + diphosphate. Its pathway is secondary metabolite biosynthesis; terpenoid biosynthesis. In terms of biological role, monoterpene synthase (TPS) involved in the biosynthesis of monoterpene natural products, components of the chemical defense arsenal. Catalyzes the conversion of (2E)-geranyl diphosphate (GPP) into 1,8-cineole, and, as minor products, alpha-terpineol, beta-pinene, alpha-pinene, sabinene and myrcene. In Salvia fruticosa (Greek sage), this protein is Cineole synthase 1, chloroplastic.